We begin with the raw amino-acid sequence, 237 residues long: UDP-Gal:alpha-D-GlcNAc-diphosphoundecaprenol beta-1,4-galactosyltransferase (237 aa).

The active-site Nucleophile is the Glu101.

Belongs to the glycosyltransferase 26 family. Requires Mn(2+) as cofactor. It depends on Ni(2+) as a cofactor. Pb(2+) serves as cofactor.

It carries out the reaction N-acetyl-alpha-D-glucosaminyl-di-trans,octa-cis-undecaprenyl diphosphate + UDP-alpha-D-galactose = beta-D-Gal-(1-&gt;4)-alpha-D-GlcNAc-di-trans,octa-cis-undecaprenyl diphosphate + UDP + H(+). Its pathway is bacterial outer membrane biogenesis; LPS O-antigen biosynthesis. Its function is as follows. Galactosyltransferase that adds one galactose residue in the beta-1-4 linkage to GlcNAc-alpha-pyrophosphate-lipid in the biosynthesis of the O-polysaccharide repeating unit of the O antigen. This is UDP-Gal:alpha-D-GlcNAc-diphosphoundecaprenol beta-1,4-galactosyltransferase (wfeD) from Shigella boydii.